A 494-amino-acid polypeptide reads, in one-letter code: Monocarboxylate transporter 1 (494 aa).

Residues 1-22 are Cytoplasmic-facing; the sequence is MPPAIGGPVGYTPPDGGWGWAV. A helical transmembrane segment spans residues 23–44; that stretch reads VVGAFISIGFSYAFPKSITVFF. Lys-38 provides a ligand contact to (S)-lactate. The Extracellular portion of the chain corresponds to 45-55; it reads KEIEIIFSATT. The helical transmembrane segment at 56-80 threads the bilayer; that stretch reads SEVSWISSIMLAVMYAGGPISSILV. The Cytoplasmic segment spans residues 81-84; it reads NKYG. A helical transmembrane segment spans residues 85–105; it reads SRPVMIAGGCLSGCGLIAASF. The Extracellular portion of the chain corresponds to 106-109; it reads CNTV. The helical transmembrane segment at 110–132 threads the bilayer; sequence QELYFCIGVIGGLGLAFNLNPAL. The Cytoplasmic portion of the chain corresponds to 133 to 146; the sequence is TMIGKYFYKKRPLA. A helical membrane pass occupies residues 147–169; that stretch reads NGLAMAGSPVFLSTLAPLNQAFF. The Extracellular portion of the chain corresponds to 170–174; the sequence is GIFGW. A helical transmembrane segment spans residues 175-194; the sequence is RGSFLILGGLLLNCCVAGSL. At 195–254 the chain is on the cytoplasmic side; that stretch reads MRPIGPQQGKVEKLKSKESLQEAGKSDANTDLIGGSPKGEKLSVFQTVNKFLDLSLFTHR. Ser-210, Ser-213, and Ser-220 each carry phosphoserine. Thr-224 is subject to Phosphothreonine. The residue at position 230 (Ser-230) is a Phosphoserine. The chain crosses the membrane as a helical span at residues 255–281; the sequence is GFLLYLSGNVVMFFGLFTPLVFLSNYG. The Extracellular portion of the chain corresponds to 282–288; sequence KSKHFSS. Residues 289–310 form a helical membrane-spanning segment; sequence EKSAFLLSILAFVDMVARPSMG. Asp-302 contacts H(+). Arg-306 provides a ligand contact to (S)-lactate. Over 311-321 the chain is Cytoplasmic; that stretch reads LAANTRWIRPR. Residues 322–342 traverse the membrane as a helical segment; that stretch reads VQYFFAASVVANGVCHLLAPL. The Extracellular segment spans residues 343–346; it reads STTY. The chain crosses the membrane as a helical span at residues 347–368; sequence VGFCIYAGVFGFAFGWLSSVLF. Over 369–382 the chain is Cytoplasmic; sequence ETLMDLVGPQRFSS. A helical membrane pass occupies residues 383 to 403; sequence AVGLVTIVECCPVLLGPPLLG. Topologically, residues 404–414 are extracellular; that stretch reads RLNDMYGDYKY. The chain crosses the membrane as a helical span at residues 415 to 436; it reads TYWACGVILIIAGLYLFIGMGI. The Cytoplasmic segment spans residues 437 to 494; the sequence is NYRLVAKEQKAEEKKRDGKEDETSTDVDEKPKKTMKETQSPAPLQNSSGDPAEEESPV. The segment covering 446 to 472 has biased composition (basic and acidic residues); it reads KAEEKKRDGKEDETSTDVDEKPKKTMK. The tract at residues 446 to 494 is disordered; it reads KAEEKKRDGKEDETSTDVDEKPKKTMKETQSPAPLQNSSGDPAEEESPV. At Thr-459 the chain carries Phosphothreonine. Ser-460 bears the Phosphoserine mark. Thr-461 carries the post-translational modification Phosphothreonine. A compositionally biased stretch (polar residues) spans 473-485; it reads ETQSPAPLQNSSG. Residues Ser-476, Ser-483, Ser-484, and Ser-492 each carry the phosphoserine modification.

It belongs to the major facilitator superfamily. Monocarboxylate porter (TC 2.A.1.13) family. Interacts with BSG. Interacts with EMB. Interaction with either BSG or EMB is required for expression at the cell membrane. In terms of tissue distribution, detected in erythrocytes (at protein level). Detected in brain, heart, kidney, lung, muscle, jejunum enterocytes and brain capillaries.

Its subcellular location is the cell membrane. It localises to the basolateral cell membrane. The protein localises to the apical cell membrane. The catalysed reaction is (S)-lactate(in) + H(+)(in) = (S)-lactate(out) + H(+)(out). It catalyses the reaction pyruvate(out) + H(+)(out) = pyruvate(in) + H(+)(in). The enzyme catalyses acetoacetate(out) + H(+)(out) = acetoacetate(in) + H(+)(in). It carries out the reaction (S)-3-hydroxybutanoate(out) + H(+)(out) = (S)-3-hydroxybutanoate(in) + H(+)(in). The catalysed reaction is (R)-3-hydroxybutanoate(out) + H(+)(out) = (R)-3-hydroxybutanoate(in) + H(+)(in). It catalyses the reaction 3-methyl-2-oxobutanoate(out) + H(+)(out) = 3-methyl-2-oxobutanoate(in) + H(+)(in). The enzyme catalyses 4-methyl-2-oxopentanoate(out) + H(+)(out) = 4-methyl-2-oxopentanoate(in) + H(+)(in). Its activity is regulated as follows. Inhibited by stilbene disulfonates, such as di-isothiocyanostilbene disulfonate(DIDS), a cross-linking reagent that forms covalent linkages with lysine groups. Functionally, bidirectional proton-coupled monocarboxylate transporter. Catalyzes the rapid transport across the plasma membrane of many monocarboxylates such as lactate, pyruvate, acetate and the ketone bodies acetoacetate and beta-hydroxybutyrate, and thus contributes to the maintenance of intracellular pH. The transport direction is determined by the proton motive force and the concentration gradient of the substrate monocarboxylate. MCT1 is a major lactate exporter. Plays a role in cellular responses to a high-fat diet by modulating the cellular levels of lactate and pyruvate that contribute to the regulation of central metabolic pathways and insulin secretion, with concomitant effects on plasma insulin levels and blood glucose homeostasis. Facilitates the protonated monocarboxylate form of succinate export, that its transient protonation upon muscle cell acidification in exercising muscle and ischemic heart. Functions via alternate outward- and inward-open conformation states. Protonation and deprotonation of 302-Asp is essential for the conformational transition. This is Monocarboxylate transporter 1 (Slc16a1) from Rattus norvegicus (Rat).